Consider the following 174-residue polypeptide: Crossover junction endodeoxyribonuclease RuvC (174 aa).

Residues aspartate 8, glutamate 67, and aspartate 139 contribute to the active site. Mg(2+)-binding residues include aspartate 8, glutamate 67, and aspartate 139.

This sequence belongs to the RuvC family. Homodimer which binds Holliday junction (HJ) DNA. The HJ becomes 2-fold symmetrical on binding to RuvC with unstacked arms; it has a different conformation from HJ DNA in complex with RuvA. In the full resolvosome a probable DNA-RuvA(4)-RuvB(12)-RuvC(2) complex forms which resolves the HJ. Mg(2+) serves as cofactor.

The protein resides in the cytoplasm. The catalysed reaction is Endonucleolytic cleavage at a junction such as a reciprocal single-stranded crossover between two homologous DNA duplexes (Holliday junction).. Functionally, the RuvA-RuvB-RuvC complex processes Holliday junction (HJ) DNA during genetic recombination and DNA repair. Endonuclease that resolves HJ intermediates. Cleaves cruciform DNA by making single-stranded nicks across the HJ at symmetrical positions within the homologous arms, yielding a 5'-phosphate and a 3'-hydroxyl group; requires a central core of homology in the junction. The consensus cleavage sequence is 5'-(A/T)TT(C/G)-3'. Cleavage occurs on the 3'-side of the TT dinucleotide at the point of strand exchange. HJ branch migration catalyzed by RuvA-RuvB allows RuvC to scan DNA until it finds its consensus sequence, where it cleaves and resolves the cruciform DNA. This chain is Crossover junction endodeoxyribonuclease RuvC, found in Pseudomonas entomophila (strain L48).